The following is an 82-amino-acid chain: Delta-actitoxin-Aeq2a (82 aa).

A signal peptide spans 1–19 (MNRLMILVFAAVFLALASA). The propeptide occupies 20-26 (DEDVDIA). Cystine bridges form between Cys32–Cys79, Cys34–Cys69, and Cys62–Cys80.

It belongs to the sea anemone sodium channel inhibitory toxin family. Type I subfamily.

Its subcellular location is the secreted. The protein resides in the nematocyst. In terms of biological role, binds specifically to voltage-gated sodium channels (Nav), thereby delaying their inactivation during signal transduction. Causes death to crabs (minimum lethal dose of 25 ug/kg) and mice. This chain is Delta-actitoxin-Aeq2a, found in Actinia equina (Beadlet anemone).